Here is a 381-residue protein sequence, read N- to C-terminus: Heterogeneous nuclear rnp K-like protein 2 (381 aa).

The interval 1–34 is disordered; that stretch reads MSQFFEAATPVAIPTNNTNGGSSDAGSAATGGAP. Residues 15–33 show a composition bias toward low complexity; that stretch reads TNNTNGGSSDAGSAATGGA. 3 KH domains span residues 43 to 107, 156 to 221, and 258 to 326; these read TINH…IGDI, IGYV…LIEI, and NTRI…ESML. The interval 344–381 is disordered; the sequence is LEAAEGDATVVTERSDSASFLEEKEEPQKNHDNKEEQS. 3 positions are modified to phosphoserine: serine 358, serine 360, and serine 362. A compositionally biased stretch (basic and acidic residues) spans 369-381; it reads EPQKNHDNKEEQS.

The protein belongs to the HEK2 family. Binds RNA. Post-translationally, phosphorylated by the plasma membrane-Anchored casein kinase YCK1. Phosphorylation at its C-terminus reduces its RNA-binding capacity.

Its subcellular location is the cytoplasm. The protein resides in the P-body. It is found in the nucleus. The protein localises to the chromosome. It localises to the telomere. Its function is as follows. RNA-binding protein involved in the correct localization of transcripts in the cell. RNA localization is a widespread mechanism for achieving localized protein synthesis. Required for the asymmetric localization to the daughter cell nucleus of the ASH1 transcript, coding for a specific repressor of transcription. Overexpression inhibits translation of the ASH1 transcript. Involved in the stability of transcripts, like the MTL1 mRNA. Involved in structural and functional organization of telomeric chromatin and regulates silencing at the HMR locus. The protein is Heterogeneous nuclear rnp K-like protein 2 (HEK2) of Saccharomyces cerevisiae (strain JAY291) (Baker's yeast).